The primary structure comprises 370 residues: Calcium/calmodulin-dependent protein kinase type 1 (370 aa).

A Protein kinase domain is found at 20–276 (YDFRDVLGTG…CEQALQHPWI (257 aa)). ATP-binding positions include 26-34 (LGTGAFSEV) and Lys49. Lys59 participates in a covalent cross-link: Glycyl lysine isopeptide (Lys-Gly) (interchain with G-Cter in ubiquitin). The active-site Proton acceptor is Asp141. Thr177 carries the phosphothreonine; by CaMKK1 and CaMKK2 modification. The autoinhibitory domain stretch occupies residues 276-316 (IAGDTALDKNIHQSVSEQIKKNFAKSKWKQAFNATAVVRHM). The calmodulin-binding stretch occupies residues 296–317 (KNFAKSKWKQAFNATAVVRHMR). The Nuclear export signal motif lies at 315–321 (HMRKLQL). At Ser363 the chain carries Phosphoserine.

It belongs to the protein kinase superfamily. CAMK Ser/Thr protein kinase family. CaMK subfamily. In terms of assembly, monomer. Interacts with XPO1. Interacts with MARK2, ARHGEF7/BETAPIX and GIT1. In terms of processing, phosphorylated by CaMKK1 and CaMKK2 on Thr-177. Post-translationally, polybiquitinated by the E3 ubiquitin-protein ligase complex SCF(FBXL12), leading to proteasomal degradation. In terms of tissue distribution, widely expressed. Expressed in cells of the zona glomerulosa of the adrenal cortex.

Its subcellular location is the cytoplasm. It is found in the nucleus. The enzyme catalyses L-seryl-[protein] + ATP = O-phospho-L-seryl-[protein] + ADP + H(+). The catalysed reaction is L-threonyl-[protein] + ATP = O-phospho-L-threonyl-[protein] + ADP + H(+). With respect to regulation, activated by Ca(2+)/calmodulin. Binding of calmodulin results in conformational change that relieves intrasteric autoinhibition and allows phosphorylation of Thr-177 within the activation loop by CaMKK1 or CaMKK2. Phosphorylation of Thr-177 results in several fold increase in total activity. Unlike CaMK4, is unable to exhibit autonomous activity after Ca(2+)/calmodulin activation. Its function is as follows. Calcium/calmodulin-dependent protein kinase that operates in the calcium-triggered CaMKK-CaMK1 signaling cascade and, upon calcium influx, regulates transcription activators activity, cell cycle, hormone production, cell differentiation, actin filament organization and neurite outgrowth. Recognizes the substrate consensus sequence [MVLIF]-x-R-x(2)-[ST]-x(3)-[MVLIF]. Regulates axonal extension and growth cone motility in hippocampal and cerebellar nerve cells. Upon NMDA receptor-mediated Ca(2+) elevation, promotes dendritic growth in hippocampal neurons and is essential in synapses for full long-term potentiation (LTP) and ERK2-dependent translational activation. Downstream of NMDA receptors, promotes the formation of spines and synapses in hippocampal neurons by phosphorylating ARHGEF7/BETAPIX on 'Ser-694', which results in the enhancement of ARHGEF7 activity and activation of RAC1. Promotes neuronal differentiation and neurite outgrowth by activation and phosphorylation of MARK2 on 'Ser-91', 'Ser-92', 'Ser-93' and 'Ser-294'. Promotes nuclear export of HDAC5 and binding to 14-3-3 by phosphorylation of 'Ser-259' and 'Ser-498' in the regulation of muscle cell differentiation. Regulates NUMB-mediated endocytosis by phosphorylation of NUMB on 'Ser-276' and 'Ser-295'. Involved in the regulation of basal and estrogen-stimulated migration of medulloblastoma cells through ARHGEF7/BETAPIX phosphorylation. Is required for proper activation of cyclin-D1/CDK4 complex during G1 progression in diploid fibroblasts. Plays a role in K(+) and ANG2-mediated regulation of the aldosterone synthase (CYP11B2) to produce aldosterone in the adrenal cortex. Phosphorylates EIF4G3/eIF4GII. In vitro phosphorylates CREB1, ATF1, CFTR, MYL9 and SYN1/synapsin I. This chain is Calcium/calmodulin-dependent protein kinase type 1 (CAMK1), found in Homo sapiens (Human).